The primary structure comprises 314 residues: Methionyl-tRNA formyltransferase (314 aa).

Position 113–116 (113–116 (SLLP)) interacts with (6S)-5,6,7,8-tetrahydrofolate.

It belongs to the Fmt family.

It catalyses the reaction L-methionyl-tRNA(fMet) + (6R)-10-formyltetrahydrofolate = N-formyl-L-methionyl-tRNA(fMet) + (6S)-5,6,7,8-tetrahydrofolate + H(+). Attaches a formyl group to the free amino group of methionyl-tRNA(fMet). The formyl group appears to play a dual role in the initiator identity of N-formylmethionyl-tRNA by promoting its recognition by IF2 and preventing the misappropriation of this tRNA by the elongation apparatus. This chain is Methionyl-tRNA formyltransferase, found in Pseudomonas syringae pv. syringae (strain B728a).